The chain runs to 654 residues: Bifunctional 3'-phosphoadenosine 5'-phosphosulfate synthase pps-1 (654 aa).

The disordered stretch occupies residues 1-26 (MLTPRDENNEGDAMPMLKKPRYSSLS). Residues 1 to 231 (MLTPRDENNE…VLDHLESKGL (231 aa)) are adenylyl-sulfate kinase. 66–71 (GAGKTT) is an ATP binding site. Residues 93–96 (DNIR), Phe105, 110–113 (RQEN), 136–137 (IS), Lys175, and 190–191 (GF) each bind adenosine 5'-phosphosulfate. ATP contacts are provided by residues Cys218, 449 to 452 (QLRN), 550 to 554 (GRDPA), and Ala592. The interval 242–653 (VRELFVSDDL…AGYYKSLQNS (412 aa)) is sulfate adenylyltransferase.

In the N-terminal section; belongs to the APS kinase family. This sequence in the C-terminal section; belongs to the sulfate adenylyltransferase family.

It is found in the nucleus. It catalyses the reaction sulfate + ATP + H(+) = adenosine 5'-phosphosulfate + diphosphate. The catalysed reaction is adenosine 5'-phosphosulfate + ATP = 3'-phosphoadenylyl sulfate + ADP + H(+). Its pathway is sulfur metabolism; sulfate assimilation. Its function is as follows. Bifunctional enzyme with both ATP sulfurylase and APS kinase activity, which mediates two steps in the sulfate activation pathway. The first step is the transfer of a sulfate group to ATP to yield adenosine 5'-phosphosulfate (APS), and the second step is the transfer of a phosphate group from ATP to APS yielding 3'-phosphoadenylylsulfate (PAPS: activated sulfate donor used by sulfotransferase). Required for normal growth and development. Involved in several aspects of both embryonic and postembryonic development, including molting, changes in cell shape, and patterning of epithelial and muscle cells. The polypeptide is Bifunctional 3'-phosphoadenosine 5'-phosphosulfate synthase pps-1 (Caenorhabditis elegans).